Consider the following 606-residue polypeptide: Glutamine--fructose-6-phosphate aminotransferase [isomerizing] (606 aa).

Residue Cys2 is the Nucleophile; for GATase activity of the active site. The region spanning 2-218 is the Glutamine amidotransferase type-2 domain; the sequence is CGIFGYLGEK…SGELAVLRIG (217 aa). SIS domains follow at residues 278-424 and 448-596; these read FTES…HRQV and LDSS…VDRP. The active-site For Fru-6P isomerization activity is Lys601.

Homodimer.

It is found in the cytoplasm. The enzyme catalyses D-fructose 6-phosphate + L-glutamine = D-glucosamine 6-phosphate + L-glutamate. In terms of biological role, catalyzes the first step in hexosamine metabolism, converting fructose-6P into glucosamine-6P using glutamine as a nitrogen source. The protein is Glutamine--fructose-6-phosphate aminotransferase [isomerizing] of Chlamydia trachomatis serovar D (strain ATCC VR-885 / DSM 19411 / UW-3/Cx).